Reading from the N-terminus, the 360-residue chain is 3-dehydroquinate synthase (360 aa).

NAD(+) is bound by residues 71 to 76 (DGEAHK), 105 to 109 (GVVGD), 129 to 130 (TT), K142, and K151. Residues E184, H247, and H264 each contribute to the Zn(2+) site.

The protein belongs to the sugar phosphate cyclases superfamily. Dehydroquinate synthase family. Requires Co(2+) as cofactor. Zn(2+) serves as cofactor. It depends on NAD(+) as a cofactor.

The protein localises to the cytoplasm. It catalyses the reaction 7-phospho-2-dehydro-3-deoxy-D-arabino-heptonate = 3-dehydroquinate + phosphate. It participates in metabolic intermediate biosynthesis; chorismate biosynthesis; chorismate from D-erythrose 4-phosphate and phosphoenolpyruvate: step 2/7. Catalyzes the conversion of 3-deoxy-D-arabino-heptulosonate 7-phosphate (DAHP) to dehydroquinate (DHQ). The protein is 3-dehydroquinate synthase of Azoarcus sp. (strain BH72).